Reading from the N-terminus, the 143-residue chain is Cofilin (143 aa).

Residues 5–137 (GVAVSDEALK…AYESVLEKIS (133 aa)) form the ADF-H domain.

It belongs to the actin-binding proteins ADF family.

The protein localises to the cytoplasm. Its subcellular location is the cytoskeleton. It localises to the nucleus matrix. Its function is as follows. Controls reversibly actin polymerization and depolymerization in a pH-sensitive manner. It has the ability to bind G- and F-actin in a 1:1 ratio of cofilin to actin. Binding to F-actin is regulated by tropomyosin. It is the major component of intranuclear and cytoplasmic actin rods. Required for accumulation of actin at the cell division site via depolymerizing actin at the cell ends. In association with myosin II has a role in the assembly of the contractile ring via severing actin filaments. Involved in the maintenance of the contractile ring once formed. In association with profilin and capping protein, has a role in the mitotic reorganization of the actin cytoskeleton. The sequence is that of Cofilin (COF1) from Ogataea parapolymorpha (strain ATCC 26012 / BCRC 20466 / JCM 22074 / NRRL Y-7560 / DL-1) (Yeast).